The chain runs to 204 residues: Allatotropin (204 aa).

The N-terminal stretch at 1–20 (MNLTMQLAVIVAVCLCLAEG) is a signal peptide. A propeptide spanning residues 21–35 (APDVRLTRTKQQRPT) is cleaved from the precursor. Residues 47–83 (RGFGKRDRPHPRAERDVDHQAPSARPNRGTPTFKSPT) are disordered. Phenylalanine amide is present on F49. The span at 50-65 (GKRDRPHPRAERDVDH) shows a compositional bias: basic and acidic residues. The propeptide occupies 53–204 (DRPHPRAERD…LSSEELLRNF (152 aa)).

Expressed extensively in the brain, frontal ganglion and terminal ganglion of the day 2 fifth instar larva (at protein level). Not expressed in the larval brain after day 4 of the fifth instar, or in the brain of the pupa or adult. Expression in the terminal ganglion is localized to cells in the posterior portion of the seventh neuromere of day 2 fifth instar larvae. In the pupa and adult expression is detected in the medial region of neuromere 6, the dorsal medial region of neuromere 7, and the posterior neuromere of the terminal ganglion (at protein level). In the frontal ganglion expression decreases in the wandering larvae and is present at low levels in during pupal ecdysis, but is not detected in the adult. Expressed in the subesophageal ganglion of day 2 fifth instar larva, but not at any time before or after day 2. Not expressed in the abdominal ganglia 1-6 of the day 2 fifth instar larva (at protein level). Expressed in the anterior neuromeres of the pterothoracic ganglion in pupa but not in adult (at protein level). Expressed in the unfused abdominal ganglia of day 10 pupae, and in pharate adult is expressed in median neurosecretory cells M1, M2 and M5, but not in median neurosecretory cells M3 and M4 (at protein level). Not expressed in the differentiated median neurosecretory cells M5 of the larva (at protein level). In the pharate adult brain isoform 3 is the predominant form, with lower levels of isoform 2 and very low levels of isoform 1 detected. In the pharate adult nerve cord isoform 3 is the predominant form, with lower levels of isoform 2 and no isoform 1 detected. In the pharate adult frontal ganglion isoform 3 is expressed, but not isoform 1 and isoform 2.

It localises to the secreted. Functionally, neuropeptide stimulator of juvenile hormone synthesis. Cardioregulatory neurohormone that increases heart beat rate in the adult but not in the larva. Inhibits active ion transport in the midgut of feeding fourth instar and day 2 fifth instar larva, but not in the midgut of pharate or wandering fifth instar larva. The protein is Allatotropin of Manduca sexta (Tobacco hawkmoth).